Here is a 347-residue protein sequence, read N- to C-terminus: Probable cytosolic iron-sulfur protein assembly protein 1 (347 aa).

WD repeat units follow at residues 11–48, 62–101, 122–161, 168–207, 212–255, 266–304, and 311–347; these read LHNEKIWDIDCYKGLLATASTDRRIKIVNIGDIGDGLV, SHKKTVRSVAWRPHSTILAAGSFDSTVSIWAKDENDGDAD, GHENEVKSVAWSKDGYFLATCSRDKSVWIWESDEMGEEYE, EHSQDVKHVVWHPFKDILASSSYDDTIRIWKEYDDDWEAA, GHEG…SIEE, VHGKPVYSVSWSEDGLIASAGSDGMLVIYKENKDNVWEV, and SHSIYEINVVKWIKLNNGKSYLATAGDDGYVNIWAYN.

Belongs to the WD repeat CIA1 family. As to quaternary structure, interacts with NAR1.

Its subcellular location is the cytoplasm. It is found in the nucleus. Essential component of the cytosolic iron-sulfur (Fe/S) protein assembly machinery. Required for the maturation of extramitochondrial Fe/S proteins. The protein is Probable cytosolic iron-sulfur protein assembly protein 1 of Vanderwaltozyma polyspora (strain ATCC 22028 / DSM 70294 / BCRC 21397 / CBS 2163 / NBRC 10782 / NRRL Y-8283 / UCD 57-17) (Kluyveromyces polysporus).